The sequence spans 269 residues: Ribonuclease HII (269 aa).

The 187-residue stretch at 83-269 (YLIAGVDEVG…HRMSFLTNIL (187 aa)) folds into the RNase H type-2 domain. 3 residues coordinate a divalent metal cation: Asp-89, Glu-90, and Asp-185.

This sequence belongs to the RNase HII family. The cofactor is Mn(2+). Mg(2+) is required as a cofactor.

The protein resides in the cytoplasm. The catalysed reaction is Endonucleolytic cleavage to 5'-phosphomonoester.. Its function is as follows. Endonuclease that specifically degrades the RNA of RNA-DNA hybrids. The chain is Ribonuclease HII from Clostridium botulinum (strain Loch Maree / Type A3).